Reading from the N-terminus, the 137-residue chain is MDTAIILGLLVAVFYGVGTFFAKIVCEKNPLFQWIVVNIVGIILCLIILLKYKNIIITDQKILTYAIISAVLVVIGSLLLYYALYKGKASIVVPLSSIGPAITVALSILFLKETLTLPQMIGIVLIIIGIILLSISN.

5 helical membrane passes run 4 to 26 (AIIL…KIVC), 35 to 57 (IVVN…NIII), 62 to 84 (ILTY…YYAL), 89 to 111 (ASIV…ILFL), and 116 to 135 (TLPQ…LLSI). An EamA domain is found at 13 to 135 (VFYGVGTFFA…IIIGIILLSI (123 aa)).

The protein localises to the cell membrane. This is an uncharacterized protein from Methanocaldococcus jannaschii (strain ATCC 43067 / DSM 2661 / JAL-1 / JCM 10045 / NBRC 100440) (Methanococcus jannaschii).